Here is a 406-residue protein sequence, read N- to C-terminus: Acetate kinase (406 aa).

N7 provides a ligand contact to Mg(2+). K14 is a binding site for ATP. Substrate is bound at residue R90. The active-site Proton donor/acceptor is the D147. Residues 207-211 (HLGNG), 283-285 (DMR), and 331-335 (GVGEN) contribute to the ATP site. E385 is a binding site for Mg(2+).

This sequence belongs to the acetokinase family. In terms of assembly, homodimer. The cofactor is Mg(2+). Mn(2+) serves as cofactor.

It is found in the cytoplasm. The catalysed reaction is acetate + ATP = acetyl phosphate + ADP. Its pathway is metabolic intermediate biosynthesis; acetyl-CoA biosynthesis; acetyl-CoA from acetate: step 1/2. Functionally, catalyzes the formation of acetyl phosphate from acetate and ATP. Can also catalyze the reverse reaction. This Fervidobacterium nodosum (strain ATCC 35602 / DSM 5306 / Rt17-B1) protein is Acetate kinase.